The sequence spans 342 residues: S-adenosylmethionine:tRNA ribosyltransferase-isomerase (342 aa).

It belongs to the QueA family. As to quaternary structure, monomer.

It localises to the cytoplasm. It carries out the reaction 7-aminomethyl-7-carbaguanosine(34) in tRNA + S-adenosyl-L-methionine = epoxyqueuosine(34) in tRNA + adenine + L-methionine + 2 H(+). It functions in the pathway tRNA modification; tRNA-queuosine biosynthesis. In terms of biological role, transfers and isomerizes the ribose moiety from AdoMet to the 7-aminomethyl group of 7-deazaguanine (preQ1-tRNA) to give epoxyqueuosine (oQ-tRNA). The chain is S-adenosylmethionine:tRNA ribosyltransferase-isomerase from Oceanobacillus iheyensis (strain DSM 14371 / CIP 107618 / JCM 11309 / KCTC 3954 / HTE831).